The primary structure comprises 352 residues: Alanine racemase (352 aa).

Lys-33 serves as the catalytic Proton acceptor; specific for D-alanine. Residue Lys-33 is modified to N6-(pyridoxal phosphate)lysine. Arg-129 provides a ligand contact to substrate. The active-site Proton acceptor; specific for L-alanine is the Tyr-250. Met-298 contacts substrate.

Belongs to the alanine racemase family. Pyridoxal 5'-phosphate is required as a cofactor.

The enzyme catalyses L-alanine = D-alanine. It functions in the pathway amino-acid biosynthesis; D-alanine biosynthesis; D-alanine from L-alanine: step 1/1. Catalyzes the interconversion of L-alanine and D-alanine. May also act on other amino acids. The sequence is that of Alanine racemase (alr) from Neisseria meningitidis serogroup B (strain ATCC BAA-335 / MC58).